The sequence spans 307 residues: tRNA pseudouridine synthase B (307 aa).

Residue Asp41 is the Nucleophile of the active site.

This sequence belongs to the pseudouridine synthase TruB family. Type 1 subfamily.

The catalysed reaction is uridine(55) in tRNA = pseudouridine(55) in tRNA. Functionally, responsible for synthesis of pseudouridine from uracil-55 in the psi GC loop of transfer RNAs. The polypeptide is tRNA pseudouridine synthase B (Prochlorococcus marinus (strain AS9601)).